A 412-amino-acid polypeptide reads, in one-letter code: Polyferredoxin protein MvhB (412 aa).

12 4Fe-4S ferredoxin-type domains span residues 2–29 (IVIN…VKPE), 30–57 (DVIY…HEDI), 66–95 (KKIT…LVND), 96–127 (GKAS…IEGV), 138–166 (DKPI…LPKY), 168–197 (ESIE…ISGK), 207–236 (ENFT…PKSD), 237–265 (LTVS…LEVK), 275–304 (EGIV…VVSP), 311–344 (GLKK…LVEV), 356–385 (NRIQ…LTDD), and 386–412 (EKLP…LLIK). The [4Fe-4S] cluster site is built by Cys9, Cys12, Cys15, and Cys19. [4Fe-4S] cluster-binding residues include Cys75, Cys78, Cys81, Cys85, Cys107, Cys110, Cys113, Cys117, Cys146, Cys149, Cys152, Cys156, Cys177, Cys180, Cys183, Cys187, Cys216, Cys219, Cys222, Cys226, Cys245, Cys248, Cys251, Cys255, Cys284, Cys287, Cys290, Cys294, Cys324, Cys327, Cys330, Cys334, Cys365, Cys368, Cys371, and Cys375.

Requires [4Fe-4S] cluster as cofactor.

This is Polyferredoxin protein MvhB (mvhB) from Methanothermus fervidus.